We begin with the raw amino-acid sequence, 309 residues long: Porphobilinogen deaminase (309 aa).

C244 is subject to S-(dipyrrolylmethanemethyl)cysteine.

Belongs to the HMBS family. Monomer. It depends on dipyrromethane as a cofactor.

It carries out the reaction 4 porphobilinogen + H2O = hydroxymethylbilane + 4 NH4(+). It functions in the pathway porphyrin-containing compound metabolism; protoporphyrin-IX biosynthesis; coproporphyrinogen-III from 5-aminolevulinate: step 2/4. Functionally, tetrapolymerization of the monopyrrole PBG into the hydroxymethylbilane pre-uroporphyrinogen in several discrete steps. The protein is Porphobilinogen deaminase of Listeria monocytogenes serotype 4a (strain HCC23).